The chain runs to 398 residues: Succinate--CoA ligase [ADP-forming] subunit beta (398 aa).

One can recognise an ATP-grasp domain in the interval 9-253 (KELLKSYGVA…EAEEDPKELE (245 aa)). ATP-binding positions include Lys46, 53 to 55 (GRG), Glu108, Cys111, and Glu116. Positions 208 and 222 each coordinate Mg(2+). Residues Asn273 and 330-332 (GIM) each bind substrate.

The protein belongs to the succinate/malate CoA ligase beta subunit family. Heterotetramer of two alpha and two beta subunits. It depends on Mg(2+) as a cofactor.

The enzyme catalyses succinate + ATP + CoA = succinyl-CoA + ADP + phosphate. It catalyses the reaction GTP + succinate + CoA = succinyl-CoA + GDP + phosphate. Its pathway is carbohydrate metabolism; tricarboxylic acid cycle; succinate from succinyl-CoA (ligase route): step 1/1. Succinyl-CoA synthetase functions in the citric acid cycle (TCA), coupling the hydrolysis of succinyl-CoA to the synthesis of either ATP or GTP and thus represents the only step of substrate-level phosphorylation in the TCA. The beta subunit provides nucleotide specificity of the enzyme and binds the substrate succinate, while the binding sites for coenzyme A and phosphate are found in the alpha subunit. This Acidiphilium cryptum (strain JF-5) protein is Succinate--CoA ligase [ADP-forming] subunit beta.